Consider the following 540-residue polypeptide: Chaperonin GroEL 1 (540 aa).

ATP is bound by residues 29–32 (TLGP), 86–90 (DGTTT), Gly413, 478–480 (NAA), and Asp494.

It belongs to the chaperonin (HSP60) family. In terms of assembly, forms a cylinder of 14 subunits composed of two heptameric rings stacked back-to-back. Interacts with the co-chaperonin GroES.

The protein resides in the cytoplasm. The catalysed reaction is ATP + H2O + a folded polypeptide = ADP + phosphate + an unfolded polypeptide.. Its function is as follows. Together with its co-chaperonin GroES, plays an essential role in assisting protein folding. The GroEL-GroES system forms a nano-cage that allows encapsulation of the non-native substrate proteins and provides a physical environment optimized to promote and accelerate protein folding. This is Chaperonin GroEL 1 from Mycobacterium sp. (strain JLS).